We begin with the raw amino-acid sequence, 329 residues long: Mitochondrial substrate carrier family protein W (329 aa).

Residues 1–39 (MTTNNSNDNNKRYGIIKQQLQQQQQQHHQQHEQHSRLVE) lie on the Mitochondrial intermembrane side of the membrane. Solcar repeat units follow at residues 34-119 (HSRL…CKEL), 133-221 (ESPL…FKSI), and 231-321 (LGIV…IKKF). A helical transmembrane segment spans residues 40 to 60 (MTAGCGAGFMASLFTTPLDVI). At 61–90 (KTTLQVDNSSNKTIMSTVKSILDRKGGVKN) the chain is on the mitochondrial matrix side. A helical transmembrane segment spans residues 91–111 (LYLGLKPTLVGQIPSWAVYFS). Residues 112 to 135 (TYTFCKELFTKENDKHSLLEKESP) are Mitochondrial intermembrane-facing. Residues 136-156 (LIFMTSAIIAGAATSICTSPI) traverse the membrane as a helical segment. Residues 157 to 193 (WLIKTRFITQEMVGRQKKYRGIVHSMVSIYHEEGFRG) lie on the Mitochondrial matrix side of the membrane. A helical membrane pass occupies residues 194–214 (LYKGLGPSLLGVLHVGVQFPL). Over 215 to 230 (YEKFKSILKEKNKNKE) the chain is Mitochondrial intermembrane. The helical transmembrane segment at 231-251 (LGIVEIMIASSVSKIIASVVA) threads the bilayer. Residues 252-296 (YPHEVLRARSQDSSPDSPNRTYRGNIIQMFKQIVREEGWRGLYRG) lie on the Mitochondrial matrix side of the membrane. Residues 297 to 315 (MGVNLLRVTPSCVITFTSY) form a helical membrane-spanning segment. Residues 316 to 329 (EYIKKFLSQNQNHF) lie on the Mitochondrial intermembrane side of the membrane.

Belongs to the mitochondrial carrier (TC 2.A.29) family.

The protein localises to the mitochondrion inner membrane. Mitochondrial solute carriers shuttle metabolites, nucleotides, and cofactors through the mitochondrial inner membrane. This chain is Mitochondrial substrate carrier family protein W (mcfW), found in Dictyostelium discoideum (Social amoeba).